We begin with the raw amino-acid sequence, 559 residues long: Urocanate hydratase (559 aa).

NAD(+) is bound by residues 49 to 50, Gln127, 173 to 175, Asp193, Arg198, 239 to 240, 260 to 264, 270 to 271, and Tyr319; these read GG, GMG, NA, QTSAH, and YL. Residue Cys407 is part of the active site. Gly489 provides a ligand contact to NAD(+).

It belongs to the urocanase family. NAD(+) is required as a cofactor.

It is found in the cytoplasm. It carries out the reaction 4-imidazolone-5-propanoate = trans-urocanate + H2O. The protein operates within amino-acid degradation; L-histidine degradation into L-glutamate; N-formimidoyl-L-glutamate from L-histidine: step 2/3. Catalyzes the conversion of urocanate to 4-imidazolone-5-propionate. In Shouchella clausii (strain KSM-K16) (Alkalihalobacillus clausii), this protein is Urocanate hydratase.